Consider the following 337-residue polypeptide: DNA-directed RNA polymerase subunit alpha (337 aa).

An alpha N-terminal domain (alpha-NTD) region spans residues 1–233; that stretch reads MIQKNWQELI…DQLSIFVNFE (233 aa). Residues 249-337 form an alpha C-terminal domain (alpha-CTD) region; that stretch reads FNPALLKKVD…DLAKRYEDQY (89 aa).

It belongs to the RNA polymerase alpha chain family. Homodimer. The RNAP catalytic core consists of 2 alpha, 1 beta, 1 beta' and 1 omega subunit. When a sigma factor is associated with the core the holoenzyme is formed, which can initiate transcription.

It carries out the reaction RNA(n) + a ribonucleoside 5'-triphosphate = RNA(n+1) + diphosphate. Its function is as follows. DNA-dependent RNA polymerase catalyzes the transcription of DNA into RNA using the four ribonucleoside triphosphates as substrates. The protein is DNA-directed RNA polymerase subunit alpha of Brucella ovis (strain ATCC 25840 / 63/290 / NCTC 10512).